The primary structure comprises 140 residues: ATP synthase epsilon chain (140 aa).

This sequence belongs to the ATPase epsilon chain family. In terms of assembly, F-type ATPases have 2 components, CF(1) - the catalytic core - and CF(0) - the membrane proton channel. CF(1) has five subunits: alpha(3), beta(3), gamma(1), delta(1), epsilon(1). CF(0) has three main subunits: a, b and c.

It localises to the cell inner membrane. Functionally, produces ATP from ADP in the presence of a proton gradient across the membrane. This Neisseria meningitidis serogroup A / serotype 4A (strain DSM 15465 / Z2491) protein is ATP synthase epsilon chain.